A 318-amino-acid chain; its full sequence is Ferrochelatase (318 aa).

Residues H186 and E264 each contribute to the Fe cation site.

It belongs to the ferrochelatase family.

It is found in the cytoplasm. The catalysed reaction is heme b + 2 H(+) = protoporphyrin IX + Fe(2+). It participates in porphyrin-containing compound metabolism; protoheme biosynthesis; protoheme from protoporphyrin-IX: step 1/1. In terms of biological role, catalyzes the ferrous insertion into protoporphyrin IX. This chain is Ferrochelatase, found in Chlamydia felis (strain Fe/C-56) (Chlamydophila felis).